Here is a 353-residue protein sequence, read N- to C-terminus: tRNA-splicing endonuclease (353 aa).

Residues tyrosine 289, histidine 300, and lysine 331 contribute to the active site.

Belongs to the tRNA-intron endonuclease family. Archaeal long subfamily. As to quaternary structure, homodimer.

The enzyme catalyses pretRNA = a 3'-half-tRNA molecule with a 5'-OH end + a 5'-half-tRNA molecule with a 2',3'-cyclic phosphate end + an intron with a 2',3'-cyclic phosphate and a 5'-hydroxyl terminus.. Its function is as follows. Endonuclease that removes tRNA introns. Cleaves pre-tRNA at the 5'- and 3'-splice sites to release the intron. The products are an intron and two tRNA half-molecules bearing 2',3' cyclic phosphate and 5'-OH termini. Recognizes a pseudosymmetric substrate in which 2 bulged loops of 3 bases are separated by a stem of 4 bp. The chain is tRNA-splicing endonuclease from Methanosarcina mazei (strain ATCC BAA-159 / DSM 3647 / Goe1 / Go1 / JCM 11833 / OCM 88) (Methanosarcina frisia).